A 184-amino-acid chain; its full sequence is Ras-related protein Rap-1A (184 aa).

GTP-binding positions include 10–18 (GSGGVGKSA), 29–35 (VEKYDPT), G60, and 116–119 (NKCD). The Effector region motif lies at 32–40 (YDPTIEDSY). Residue C181 is modified to Cysteine methyl ester. Residue C181 is the site of S-geranylgeranyl cysteine attachment. Residues 182–184 (LLL) constitute a propeptide, removed in mature form.

This sequence belongs to the small GTPase superfamily. Ras family. In terms of assembly, found in a complex, at least composed of ITGB1BP1, KRIT1 and RAP1A. Interacts (active GTP-bound form preferentially) with KRIT1 (via C-terminus FERM domain); the interaction does not induce the opening conformation of KRIT1. Found in a complex composed of CDH1, RAP1A and PKP3; PKP3 acts as a scaffold protein within the complex, the complex is required for CDH1 localization to mature desmosome cell junctions. In its GTP-bound form interacts with PLCE1 and RADIL. Interacts with SGSM1, SGSM2 and SGSM3. Interacts (via GTP-bound active form) with RAPGEF2 (via Ras-associating domain). Interacts with TBC1D21. Interacts with RAP1GDS1.

It is found in the cell membrane. The protein localises to the cytoplasm. Its subcellular location is the perinuclear region. It localises to the cell junction. The protein resides in the early endosome. It catalyses the reaction GTP + H2O = GDP + phosphate + H(+). With respect to regulation, activated by guanine nucleotide-exchange factors (GEF) EPAC and EPAC2 in a cAMP-dependent manner, and GFR. Functionally, counteracts the mitogenic function of Ras, at least partly because it can interact with Ras GAPs and RAF in a competitive manner. Together with ITGB1BP1, regulates KRIT1 localization to microtubules and membranes. Plays a role in nerve growth factor (NGF)-induced neurite outgrowth. Plays a role in the regulation of embryonic blood vessel formation. Involved in the establishment of basal endothelial barrier function. Facilitates the progressive accumulation of CDH1 at mature desmosome junctions via cAMP-dependent signaling and its interaction with PKP3. May be involved in the regulation of the vascular endothelial growth factor receptor KDR expression at endothelial cell-cell junctions. This is Ras-related protein Rap-1A (RAP1A) from Bos taurus (Bovine).